We begin with the raw amino-acid sequence, 187 residues long: MMFGGVGMATLPLSLIFAFKNRPKCVITRAQYVKVMAWQEVTDLAKRSNELGSPTRRKRLEERTKVSEKCEESPADQELVFLEDDVQALNEAFPQGEKADTSWALTVLFYLAKLVFGILGLALSVIWLLHIIVFMLVNPPAFPFLNQVFIQLDSAWGLLGTTAFAIFCYYLVMSVISGEMHSIYPMK.

The chain crosses the membrane as a helical span at residues 1–21; that stretch reads MMFGGVGMATLPLSLIFAFKN. Over 22 to 100 the chain is Extracellular; it reads RPKCVITRAQ…EAFPQGEKAD (79 aa). A helical membrane pass occupies residues 101 to 119; sequence TSWALTVLFYLAKLVFGIL. Topologically, residues 120 to 125 are cytoplasmic; sequence GLALSV. The chain crosses the membrane as a helical span at residues 126-145; that stretch reads IWLLHIIVFMLVNPPAFPFL. Over 146-155 the chain is Extracellular; sequence NQVFIQLDSA. The chain crosses the membrane as a helical span at residues 156–176; sequence WGLLGTTAFAIFCYYLVMSVI. Topologically, residues 177-187 are cytoplasmic; that stretch reads SGEMHSIYPMK.

This sequence belongs to the Casparian strip membrane proteins (CASP) family. Homodimer and heterodimers.

It is found in the cell membrane. The chain is CASP-like protein SELMODRAFT_416718 from Selaginella moellendorffii (Spikemoss).